We begin with the raw amino-acid sequence, 461 residues long: Homocitrate synthase (461 aa).

The Pyruvate carboxyltransferase domain maps to 4 to 259 (VGILDSTLRE…IEVVKLDKLQ (256 aa)). Arg-12 provides a ligand contact to 2-oxoglutarate. A Mg(2+)-binding site is contributed by Glu-13. 2-oxoglutarate is bound by residues His-76, Arg-136, and Thr-170. Residues His-198 and His-200 each coordinate Mg(2+). His-292 serves as the catalytic Proton acceptor.

Belongs to the alpha-IPM synthase/homocitrate synthase family. Homocitrate synthase LYS20/LYS21 subfamily. The cofactor is Mg(2+). Mn(2+) serves as cofactor.

The catalysed reaction is acetyl-CoA + 2-oxoglutarate + H2O = (2R)-homocitrate + CoA + H(+). It functions in the pathway amino-acid biosynthesis; L-lysine biosynthesis via AAA pathway; L-alpha-aminoadipate from 2-oxoglutarate: step 1/5. Functionally, catalyzes the aldol-type condensation of 2-oxoglutarate with acetyl-CoA to yield homocitrate. Carries out the first step of the alpha-aminoadipate (AAA) lysine biosynthesis pathway. This chain is Homocitrate synthase, found in Saccharolobus islandicus (strain Y.N.15.51 / Yellowstone #2) (Sulfolobus islandicus).